A 476-amino-acid polypeptide reads, in one-letter code: Cysteine--tRNA ligase (476 aa).

Cys36 contacts Zn(2+). The 'HIGH' region signature appears at 38-48 (PTVYDYAHIGN). Positions 221, 246, and 250 each coordinate Zn(2+). Positions 278-282 (KMSKS) match the 'KMSKS' region motif. Lys281 is a binding site for ATP.

The protein belongs to the class-I aminoacyl-tRNA synthetase family. In terms of assembly, monomer. Zn(2+) is required as a cofactor.

The protein localises to the cytoplasm. It carries out the reaction tRNA(Cys) + L-cysteine + ATP = L-cysteinyl-tRNA(Cys) + AMP + diphosphate. The protein is Cysteine--tRNA ligase of Chlamydia felis (strain Fe/C-56) (Chlamydophila felis).